Consider the following 379-residue polypeptide: Anhydro-N-acetylmuramic acid kinase (379 aa).

12–19 (GTSLDGMD) contributes to the ATP binding site.

The protein belongs to the anhydro-N-acetylmuramic acid kinase family.

It catalyses the reaction 1,6-anhydro-N-acetyl-beta-muramate + ATP + H2O = N-acetyl-D-muramate 6-phosphate + ADP + H(+). The protein operates within amino-sugar metabolism; 1,6-anhydro-N-acetylmuramate degradation. It functions in the pathway cell wall biogenesis; peptidoglycan recycling. In terms of biological role, catalyzes the specific phosphorylation of 1,6-anhydro-N-acetylmuramic acid (anhMurNAc) with the simultaneous cleavage of the 1,6-anhydro ring, generating MurNAc-6-P. Is required for the utilization of anhMurNAc either imported from the medium or derived from its own cell wall murein, and thus plays a role in cell wall recycling. This Gloeobacter violaceus (strain ATCC 29082 / PCC 7421) protein is Anhydro-N-acetylmuramic acid kinase.